The chain runs to 954 residues: Mitogen-activated protein kinase kinase kinase 10 (954 aa).

The region spanning 16–81 (PAGPVWTAVF…PSNYVAPGAP (66 aa)) is the SH3 domain. The 263-residue stretch at 98-360 (LQLEEIIGVG…GSILKRLEVI (263 aa)) folds into the Protein kinase domain. ATP contacts are provided by residues 104 to 112 (IGVGGFGKV) and Lys125. Asp222 (proton acceptor) is an active-site residue. Thr258 bears the Phosphothreonine; by autocatalysis mark. Ser262 is modified (phosphoserine; by autocatalysis and MAP4K1). Leucine-zipper regions lie at residues 384–405 (IQHMFDDLRTKEKELRSREEEL) and 419–440 (LRRREQELAEREMDIVERELHL). Disordered regions lie at residues 490 to 665 (PTLD…RWGH), 716 to 739 (RFPRGLSPPARPHGRREDVGPGLG), and 757 to 954 (STRS…HGSH). Residues Ser498, Ser502, and Ser506 each carry the phosphoserine modification. Positions 501–511 (ASPPASPSIIP) are enriched in low complexity. Thr558 is modified (phosphothreonine). Residues 566 to 578 (QKERVGGEERLKG) are compositionally biased toward basic and acidic residues. Acidic residues predominate over residues 611 to 620 (EMEEFAEAED). Residues 631–640 (STPSYLSVPL) show a composition bias toward low complexity. A compositionally biased stretch (pro residues) spans 773–790 (APSPPPSPPAPTPTPSPS). Arg857 is modified (omega-N-methylarginine). A compositionally biased stretch (pro residues) spans 913-927 (PSRPDTPESPGPPSV).

This sequence belongs to the protein kinase superfamily. STE Ser/Thr protein kinase family. MAP kinase kinase kinase subfamily. In terms of assembly, homodimer. Interacts with SH3RF2. Requires Mg(2+) as cofactor. Post-translationally, autophosphorylation on serine and threonine residues within the activation loop plays a role in enzyme activation. Expressed in brain and skeletal muscle.

The enzyme catalyses L-seryl-[protein] + ATP = O-phospho-L-seryl-[protein] + ADP + H(+). It carries out the reaction L-threonyl-[protein] + ATP = O-phospho-L-threonyl-[protein] + ADP + H(+). Homodimerization via the leucine zipper domains is required for autophosphorylation and subsequent activation. In terms of biological role, activates the JUN N-terminal pathway. This is Mitogen-activated protein kinase kinase kinase 10 (MAP3K10) from Homo sapiens (Human).